Reading from the N-terminus, the 538-residue chain is Nicotinate phosphoribosyltransferase (538 aa).

Residues tyrosine 21 and threonine 210 each contribute to the nicotinate site. Residue histidine 213 is modified to Phosphohistidine. Arginine 318 contacts nicotinate. Threonine 380 lines the 5-phospho-alpha-D-ribose 1-diphosphate pocket.

The protein belongs to the NAPRTase family. As to quaternary structure, homodimer. It depends on Mg(2+) as a cofactor. Mn(2+) serves as cofactor. In terms of processing, transiently phosphorylated on a His residue during the reaction cycle. Phosphorylation strongly increases the affinity for substrates and increases the rate of nicotinate D-ribonucleotide production. Dephosphorylation regenerates the low-affinity form of the enzyme, leading to product release.

Its subcellular location is the cytoplasm. The protein localises to the cytosol. The enzyme catalyses nicotinate + 5-phospho-alpha-D-ribose 1-diphosphate + ATP + H2O = nicotinate beta-D-ribonucleotide + ADP + phosphate + diphosphate. It functions in the pathway cofactor biosynthesis; NAD(+) biosynthesis; nicotinate D-ribonucleotide from nicotinate: step 1/1. Catalyzes the first step in the biosynthesis of NAD from nicotinic acid, the ATP-dependent synthesis of beta-nicotinate D-ribonucleotide from nicotinate and 5-phospho-D-ribose 1-phosphate. Helps prevent cellular oxidative stress via its role in NAD biosynthesis. The protein is Nicotinate phosphoribosyltransferase (NAPRT) of Bos taurus (Bovine).